We begin with the raw amino-acid sequence, 372 residues long: DNA double-strand break repair protein Mre11 (372 aa).

Mn(2+)-binding residues include aspartate 8, histidine 10, aspartate 49, and asparagine 84. Catalysis depends on histidine 85, which acts as the Proton donor. Positions 161, 190, and 192 each coordinate Mn(2+).

This sequence belongs to the MRE11/RAD32 family. As to quaternary structure, homodimer. Forms a heterotetramer composed of two Mre11 subunits and two Rad50 subunits. Mn(2+) is required as a cofactor.

Its activity is regulated as follows. Nuclease activity is regulated by Rad50. In terms of biological role, part of the Rad50/Mre11 complex, which is involved in the early steps of DNA double-strand break (DSB) repair. The complex may facilitate opening of the processed DNA ends to aid in the recruitment of HerA and NurA. Mre11 binds to DSB ends and has both double-stranded 3'-5' exonuclease activity and single-stranded endonuclease activity. This Methanococcus maripaludis (strain DSM 14266 / JCM 13030 / NBRC 101832 / S2 / LL) protein is DNA double-strand break repair protein Mre11.